The following is a 157-amino-acid chain: Small heat shock protein ibp (157 aa).

One can recognise a sHSP domain in the interval 35–148 (EKPISDTPTY…KPKKISINVP (114 aa)).

This sequence belongs to the small heat shock protein (HSP20) family.

This Buchnera aphidicola subsp. Acyrthosiphon pisum (strain APS) (Acyrthosiphon pisum symbiotic bacterium) protein is Small heat shock protein ibp (ibp).